A 171-amino-acid polypeptide reads, in one-letter code: Tubulin polymerization-promoting protein family member 2 (171 aa).

The interval 120–171 is disordered; that stretch reads LTDTSKYTGTHKERFDESGKGKGIAGREDVTDNSGYVSGYKGAGTYDKKGSN. Over residues 129–149 the composition is skewed to basic and acidic residues; that stretch reads THKERFDESGKGKGIAGREDV.

The protein belongs to the TPPP family.

It is found in the cytoplasm. The protein resides in the cytosol. It localises to the cell projection. The protein localises to the cilium. Its subcellular location is the flagellum. Its function is as follows. Probable regulator of microtubule dynamics required for sperm motility. In contrast to other members of the family, has no microtubule bundling activity. This Bos taurus (Bovine) protein is Tubulin polymerization-promoting protein family member 2.